Consider the following 146-residue polypeptide: MKGSPISQFSKTSINALTRPWKKYRDGELFYGLSKVGNKRVPLTTKQGNKTMYKGTRASGIGRHTKFGGYVINWKKVRTYVTPDMVNFELKPYVNANVPPLKHEFKGFSGGPLDPRLQLLKIKEYIVNGRVQSEGATDTSCYKERG.

The N-terminal 16 residues, 1–16 (MKGSPISQFSKTSINA), are a transit peptide targeting the mitochondrion.

Belongs to the mitochondrion-specific ribosomal protein mL41 family. Component of the mitochondrial large ribosomal subunit (mt-LSU). Mature yeast 74S mitochondrial ribosomes consist of a small (37S) and a large (54S) subunit. The 37S small subunit contains a 15S ribosomal RNA (15S mt-rRNA) and 34 different proteins. The 54S large subunit contains a 21S rRNA (21S mt-rRNA) and 46 different proteins.

The protein localises to the mitochondrion. Its function is as follows. Component of the mitochondrial ribosome (mitoribosome), a dedicated translation machinery responsible for the synthesis of mitochondrial genome-encoded proteins, including at least some of the essential transmembrane subunits of the mitochondrial respiratory chain. The mitoribosomes are attached to the mitochondrial inner membrane and translation products are cotranslationally integrated into the membrane. The protein is Large ribosomal subunit protein mL41 (MRPL27) of Saccharomyces cerevisiae (strain ATCC 204508 / S288c) (Baker's yeast).